Consider the following 337-residue polypeptide: MSIARRTTLSKFLIEQQRETNNLPADLRLLIEVVARACKAISYNVSKGALGEALGTAGSENVQGEVQKKLDILSNEILLDANEWGGNLAAMASEEMETFFPIPANYPRGEYLLVFDPLDGSSNIDVNVSIGTIFSVLRCPDGKQATEESFLQPGTQQVAAGYAVYGPQTVFVLTTGNGVNCFTLDREVGSWVLTQSNMQIPADTREYAINASNARHWYDPVKRYVDELNAGKDGPRGDNFNMRWIASMVSDVHRILNRGGVFMYPADKRTPDRPGKLRLMYEANPMSFIVEQAGGAATTGTQRIMEVQPTGLHQRVPVFLGSKNEVDRVTGYHQEKQ.

Mg(2+) contacts are provided by glutamate 94, aspartate 116, leucine 118, and aspartate 119. Substrate contacts are provided by residues 119-122, asparagine 210, and lysine 276; that span reads DGSS. Glutamate 282 contacts Mg(2+).

Belongs to the FBPase class 1 family. In terms of assembly, homotetramer. Mg(2+) is required as a cofactor.

It is found in the cytoplasm. The catalysed reaction is beta-D-fructose 1,6-bisphosphate + H2O = beta-D-fructose 6-phosphate + phosphate. The protein operates within carbohydrate biosynthesis; gluconeogenesis. The protein is Fructose-1,6-bisphosphatase class 1 of Burkholderia lata (strain ATCC 17760 / DSM 23089 / LMG 22485 / NCIMB 9086 / R18194 / 383).